A 249-amino-acid chain; its full sequence is Triosephosphate isomerase (249 aa).

A substrate-binding site is contributed by 9-11 (NWK). The Electrophile role is filled by His91. The Proton acceptor role is filled by Glu163. Substrate-binding positions include Gly169, Ser209, and 230-231 (GG).

It belongs to the triosephosphate isomerase family. Homodimer.

Its subcellular location is the cytoplasm. The enzyme catalyses D-glyceraldehyde 3-phosphate = dihydroxyacetone phosphate. It functions in the pathway carbohydrate biosynthesis; gluconeogenesis. It participates in carbohydrate degradation; glycolysis; D-glyceraldehyde 3-phosphate from glycerone phosphate: step 1/1. Its function is as follows. Involved in the gluconeogenesis. Catalyzes stereospecifically the conversion of dihydroxyacetone phosphate (DHAP) to D-glyceraldehyde-3-phosphate (G3P). The chain is Triosephosphate isomerase from Halorhodospira halophila (strain DSM 244 / SL1) (Ectothiorhodospira halophila (strain DSM 244 / SL1)).